Here is a 264-residue protein sequence, read N- to C-terminus: S-adenosylmethionine decarboxylase proenzyme (264 aa).

Catalysis depends on serine 113, which acts as the Schiff-base intermediate with substrate; via pyruvic acid. Serine 113 carries the post-translational modification Pyruvic acid (Ser); by autocatalysis. The Proton acceptor; for processing activity role is filled by histidine 118. Cysteine 141 acts as the Proton donor; for catalytic activity in catalysis.

The protein belongs to the prokaryotic AdoMetDC family. Type 2 subfamily. Heterooctamer of four alpha and four beta chains arranged as a tetramer of alpha/beta heterodimers. The cofactor is pyruvate. In terms of processing, is synthesized initially as an inactive proenzyme. Formation of the active enzyme involves a self-maturation process in which the active site pyruvoyl group is generated from an internal serine residue via an autocatalytic post-translational modification. Two non-identical subunits are generated from the proenzyme in this reaction, and the pyruvate is formed at the N-terminus of the alpha chain, which is derived from the carboxyl end of the proenzyme. The post-translation cleavage follows an unusual pathway, termed non-hydrolytic serinolysis, in which the side chain hydroxyl group of the serine supplies its oxygen atom to form the C-terminus of the beta chain, while the remainder of the serine residue undergoes an oxidative deamination to produce ammonia and the pyruvoyl group blocking the N-terminus of the alpha chain.

It catalyses the reaction S-adenosyl-L-methionine + H(+) = S-adenosyl 3-(methylsulfanyl)propylamine + CO2. Its pathway is amine and polyamine biosynthesis; S-adenosylmethioninamine biosynthesis; S-adenosylmethioninamine from S-adenosyl-L-methionine: step 1/1. Catalyzes the decarboxylation of S-adenosylmethionine to S-adenosylmethioninamine (dcAdoMet), the propylamine donor required for the synthesis of the polyamines spermine and spermidine from the diamine putrescine. The protein is S-adenosylmethionine decarboxylase proenzyme of Xanthomonas euvesicatoria pv. vesicatoria (strain 85-10) (Xanthomonas campestris pv. vesicatoria).